The sequence spans 339 residues: MPSVIVVGGQWGDEGKGSIVAYLSLHDEPEIIARGGVGTNAGHSVVINGKKYAVRQIPTGFMQTKARLLIGAGVLVDPEVFFHELEQLKDFNVKDRVGIDYRCAIIEEKHKQLDRTNGYLHGKIGTTGSGCGPANADRVMRKAKQAKDVKELEPYLTDVAQEINDALDEGSLVLVEGTQGFGLSLYYGTYPYVTSKDVTASSVAADVGIGPTRVDEVIVVFKSFPTRVGAGPFPTEMPMEEADRLGLVEYGTVTGRRRRVGWFDFEMARYSARINGATMLAVTMLDKYDKEAFGVTDYDKLPRKAKEFIEEIEERVGVPVGLIKTGPELEHIIDRRDTI.

GTP is bound by residues 12–18 (GDEGKGS) and 42–44 (GHS). Catalysis depends on aspartate 13, which acts as the Proton acceptor. Aspartate 13 and glycine 42 together coordinate Mg(2+). IMP-binding positions include 13 to 16 (DEGK), 40 to 43 (NAGH), threonine 127, arginine 141, glutamine 179, threonine 194, and arginine 256. Residue histidine 43 is the Proton donor of the active site. Position 252 to 258 (252 to 258 (TVTGRRR)) interacts with substrate. GTP is bound by residues arginine 258, 284–286 (MLD), and 324–326 (KTG).

The protein belongs to the adenylosuccinate synthetase family. In terms of assembly, homodimer. It depends on Mg(2+) as a cofactor.

The protein resides in the cytoplasm. The catalysed reaction is IMP + L-aspartate + GTP = N(6)-(1,2-dicarboxyethyl)-AMP + GDP + phosphate + 2 H(+). The protein operates within purine metabolism; AMP biosynthesis via de novo pathway; AMP from IMP: step 1/2. In terms of biological role, plays an important role in the de novo pathway of purine nucleotide biosynthesis. Catalyzes the first committed step in the biosynthesis of AMP from IMP. The protein is Adenylosuccinate synthetase of Pyrococcus horikoshii (strain ATCC 700860 / DSM 12428 / JCM 9974 / NBRC 100139 / OT-3).